Consider the following 130-residue polypeptide: uncharacterized protein (130 aa).

The interval 1 to 62 (MRMYSSDAHE…ASGVGSSCKR (62 aa)) is disordered. Residues 21–30 (PPHPLPPTGS) are compositionally biased toward pro residues.

This is an uncharacterized protein from Homo sapiens (Human).